The primary structure comprises 410 residues: 26S proteasome non-ATPase regulatory subunit 6 (410 aa).

Positions 207 to 382 (DFAGAADLFL…GVIEVNHRDS (176 aa)) constitute a PCI domain.

The protein belongs to the proteasome subunit S10 family. In terms of tissue distribution, expressed in multiple tissues including the intestine, pharynx and hypodermis.

Functionally, acts as a regulatory subunit of the 26S proteasome which is involved in the ATP-dependent degradation of ubiquitinated proteins. The protein is 26S proteasome non-ATPase regulatory subunit 6 (rpn-7) of Caenorhabditis elegans.